The chain runs to 575 residues: Potassium-transporting ATPase potassium-binding subunit (575 aa).

Helical transmembrane passes span 4–24 (SAWGLLALFLAALLVLAWPVG), 61–81 (LRYAIALLAFNAVGAVFVYAL), 133–153 (GLAVQNFFSAATGIAVAFALI), 180–200 (LWVLVPLSFVLAVFFVSQGVI), 258–278 (LANLLQMIAVFLIPAALCFAF), 289–309 (WAVLAAMTVMFVAAVMVVIPA), 344–364 (IDASALFAAVTTAASCGAVIA), 372–392 (LGGMVPMVLMQLGEVVFGGVG), 394–414 (GLYGMLIFAMLAVFIAGLMIG), 431–451 (LISIAILVTPVLVLAGTAVAV), 499–519 (LLGLAMWLGRFAVIVPVLAIA), and 545–565 (LLIGTVLLVGLLNYVPALALG).

The protein belongs to the KdpA family. In terms of assembly, the system is composed of three essential subunits: KdpA, KdpB and KdpC.

The protein resides in the cell inner membrane. In terms of biological role, part of the high-affinity ATP-driven potassium transport (or Kdp) system, which catalyzes the hydrolysis of ATP coupled with the electrogenic transport of potassium into the cytoplasm. This subunit binds the periplasmic potassium ions and delivers the ions to the membrane domain of KdpB through an intramembrane tunnel. In Variovorax paradoxus (strain S110), this protein is Potassium-transporting ATPase potassium-binding subunit.